The following is an 81-amino-acid chain: Cytotoxin 5b (81 aa).

The signal sequence occupies residues 1–21 (MKTLLLTLLVVTIVCLDLGYT). 4 disulfides stabilise this stretch: Cys24–Cys42, Cys35–Cys59, Cys63–Cys74, and Cys75–Cys80.

The protein belongs to the three-finger toxin family. Short-chain subfamily. Type IA cytotoxin sub-subfamily. In terms of assembly, monomer in solution; Homodimer and oligomer in the presence of negatively charged lipids forming a pore with a size ranging between 20 and 30 Angstroms. As to expression, expressed by the venom gland.

The protein localises to the secreted. Its subcellular location is the target cell membrane. Functionally, shows cytolytic activity on many different cells by forming pore in lipid membranes. In vivo, increases heart rate or kills the animal by cardiac arrest. In addition, it binds to heparin with high affinity, interacts with Kv channel-interacting protein 1 (KCNIP1) in a calcium-independent manner, and binds to integrin alpha-V/beta-3 (ITGAV/ITGB3) with moderate affinity. In Naja sputatrix (Malayan spitting cobra), this protein is Cytotoxin 5b.